A 310-amino-acid chain; its full sequence is Carbamate kinase 1 (310 aa).

This sequence belongs to the carbamate kinase family.

Its subcellular location is the cytoplasm. The enzyme catalyses hydrogencarbonate + NH4(+) + ATP = carbamoyl phosphate + ADP + H2O + H(+). It functions in the pathway metabolic intermediate metabolism; carbamoyl phosphate degradation; CO(2) and NH(3) from carbamoyl phosphate: step 1/1. The chain is Carbamate kinase 1 (arcC1) from Staphylococcus aureus (strain MRSA252).